Consider the following 200-residue polypeptide: Recombination protein RecR (200 aa).

The C4-type zinc-finger motif lies at 59 to 74 (CEVCGNVCESSPCTIC). Residues 82 to 177 (GTICVVEEPK…KVTRLASGLP (96 aa)) enclose the Toprim domain.

The protein belongs to the RecR family.

May play a role in DNA repair. It seems to be involved in an RecBC-independent recombinational process of DNA repair. It may act with RecF and RecO. This Bifidobacterium animalis subsp. lactis (strain AD011) protein is Recombination protein RecR.